The sequence spans 766 residues: Isocitrate lyase 2 (766 aa).

106-108 (GGW) contacts substrate. Asp177 is a binding site for Mg(2+). Catalysis depends on Cys215, which acts as the Proton acceptor. Residues 216-217 (GH), Arg252, 487-491 (NLSPS), and Thr522 each bind substrate.

Belongs to the isocitrate lyase/PEP mutase superfamily. Isocitrate lyase family. Mg(2+) serves as cofactor.

It catalyses the reaction D-threo-isocitrate = glyoxylate + succinate. It participates in carbohydrate metabolism; glyoxylate cycle; (S)-malate from isocitrate: step 1/2. In terms of biological role, involved in the persistence and virulence of Mycobacterium. Catalyzes the reversible formation of succinate and glyoxylate from isocitrate, a key step of the glyoxylate cycle, which operates as an anaplerotic route for replenishing the tricarboxylic acid cycle during growth on fatty acid substrates. The chain is Isocitrate lyase 2 (aceA) from Mycobacterium bovis (strain ATCC BAA-935 / AF2122/97).